We begin with the raw amino-acid sequence, 463 residues long: tRNA modification GTPase MnmE (463 aa).

(6S)-5-formyl-5,6,7,8-tetrahydrofolate is bound by residues Arg27, Glu92, and Lys131. A TrmE-type G domain is found at 234–386 (GIKLAIVGKP…LEDHLLKIYS (153 aa)). Asn244 contributes to the K(+) binding site. GTP is bound by residues 244–249 (NVGKSS), 263–269 (TNVAGTT), and 288–291 (DTAG). A Mg(2+)-binding site is contributed by Ser248. Residues Thr263, Val265, and Thr268 each coordinate K(+). Thr269 contributes to the Mg(2+) binding site. (6S)-5-formyl-5,6,7,8-tetrahydrofolate is bound at residue Lys463.

This sequence belongs to the TRAFAC class TrmE-Era-EngA-EngB-Septin-like GTPase superfamily. TrmE GTPase family. As to quaternary structure, homodimer. Heterotetramer of two MnmE and two MnmG subunits. Requires K(+) as cofactor.

It is found in the cytoplasm. Exhibits a very high intrinsic GTPase hydrolysis rate. Involved in the addition of a carboxymethylaminomethyl (cmnm) group at the wobble position (U34) of certain tRNAs, forming tRNA-cmnm(5)s(2)U34. This is tRNA modification GTPase MnmE from Mycoplasmopsis synoviae (strain 53) (Mycoplasma synoviae).